A 105-amino-acid chain; its full sequence is Large ribosomal subunit protein uL24 (105 aa).

Belongs to the universal ribosomal protein uL24 family. As to quaternary structure, part of the 50S ribosomal subunit.

One of two assembly initiator proteins, it binds directly to the 5'-end of the 23S rRNA, where it nucleates assembly of the 50S subunit. Its function is as follows. One of the proteins that surrounds the polypeptide exit tunnel on the outside of the subunit. The sequence is that of Large ribosomal subunit protein uL24 from Aliivibrio salmonicida (strain LFI1238) (Vibrio salmonicida (strain LFI1238)).